Reading from the N-terminus, the 156-residue chain is Ribosomal RNA large subunit methyltransferase H (156 aa).

S-adenosyl-L-methionine-binding positions include Leu-73, Gly-104, and 123–128 (LSKLTL).

The protein belongs to the RNA methyltransferase RlmH family. As to quaternary structure, homodimer.

Its subcellular location is the cytoplasm. The enzyme catalyses pseudouridine(1915) in 23S rRNA + S-adenosyl-L-methionine = N(3)-methylpseudouridine(1915) in 23S rRNA + S-adenosyl-L-homocysteine + H(+). Functionally, specifically methylates the pseudouridine at position 1915 (m3Psi1915) in 23S rRNA. The protein is Ribosomal RNA large subunit methyltransferase H of Hydrogenovibrio crunogenus (strain DSM 25203 / XCL-2) (Thiomicrospira crunogena).